The sequence spans 146 residues: Ribonuclease H (146 aa).

The RNase H type-1 domain occupies 4–145 (ELNKVVIYTD…ADILARSQIS (142 aa)). The Mg(2+) site is built by Asp-13, Glu-51, Asp-73, and Asp-137.

Belongs to the RNase H family. In terms of assembly, monomer. Mg(2+) is required as a cofactor.

The protein resides in the cytoplasm. The enzyme catalyses Endonucleolytic cleavage to 5'-phosphomonoester.. Functionally, endonuclease that specifically degrades the RNA of RNA-DNA hybrids. This chain is Ribonuclease H, found in Ehrlichia canis (strain Jake).